Consider the following 92-residue polypeptide: Small ribosomal subunit protein uS19 (92 aa).

This sequence belongs to the universal ribosomal protein uS19 family.

Protein S19 forms a complex with S13 that binds strongly to the 16S ribosomal RNA. This chain is Small ribosomal subunit protein uS19, found in Buchnera aphidicola subsp. Schizaphis graminum (strain Sg).